A 501-amino-acid polypeptide reads, in one-letter code: L-arabinose isomerase (501 aa).

Mn(2+) contacts are provided by glutamate 306, glutamate 333, histidine 350, and histidine 449.

Belongs to the arabinose isomerase family. The cofactor is Mn(2+).

The enzyme catalyses beta-L-arabinopyranose = L-ribulose. It participates in carbohydrate degradation; L-arabinose degradation via L-ribulose; D-xylulose 5-phosphate from L-arabinose (bacterial route): step 1/3. Functionally, catalyzes the conversion of L-arabinose to L-ribulose. The sequence is that of L-arabinose isomerase from Herpetosiphon aurantiacus (strain ATCC 23779 / DSM 785 / 114-95).